The primary structure comprises 618 residues: Nuclear RNA export factor 1 (618 aa).

The span at M1–V15 shows a compositional bias: basic and acidic residues. The interval M1–G113 is disordered. A2 is subject to N-acetylalanine. The segment at A2–A59 is minor non-specific RNA-binding. Positions A2–N117 are RNA-binding (RBD). The interaction with ALYREF/THOC4 and LUZP4 stretch occupies residues A2–Y197. Residues Q19–F28 are compositionally biased toward basic residues. The residue at position 41 (R41) is an Asymmetric dimethylarginine; alternate. The residue at position 41 (R41) is an Omega-N-methylarginine; alternate. The segment at M60 to N117 is major non-specific RNA-binding. Residues M60–N117 form an RNA binding region. The Nuclear localization signal motif lies at G66 to R99. A compositionally biased stretch (basic and acidic residues) spans R80–A102. A Nuclear export signal motif is present at residues G82–T109. The RRM domain occupies W118 to Y197. Y125 bears the 3'-nitrotyrosine mark. 4 LRR repeats span residues E265 to P290, N291 to L314, K315 to E342, and R343 to P370. Positions L385–V535 constitute an NTF2 domain. One can recognise a TAP-C domain in the interval P564–K618.

Belongs to the NXF family. In terms of assembly, heterodimer (via NTF2 domain) with NXT1. The formation of NXF1-NXT1 heterodimers is required for the NXF1-mediated nuclear mRNA export. Forms a complex with RANBP2/NUP358, NXT1 and RANGAP1. Associates with the exon junction complex (EJC). Associates with the transcription/export (TREX) complex. Found in a mRNA complex with UPF3A and UPF3B. Found in a post-splicing complex with RBM8A, UPF1, UPF2, UPF3A, UPF3B and RNPS1. Interacts (via N-terminus) with DHX9 (via N-terminus); this interaction is direct and negatively regulates NXF1-mediated nuclear export of constitutive transport element (CTE)-containing cellular mRNAs. Interacts with FYTTD1/UIF. Interacts with EIF4A3. Interacts with NUP42. Interacts with ALYREF/THOC4. Interacts with CHTOP. Interacts with FRG1 (via N-terminus). Interacts with LUZP4. Interacts with FMR1; the interaction occurs in a mRNA-dependent and polyribosomes-independent manner in the nucleus. Interacts with CPSF6 (via N-terminus); this interaction is direct. Interacts with RBM15. Interacts with RBM15B. Interacts with MCM3AP; this interaction is not mediated by RNA. Interacts with DDX3X (via C-terminus); this interaction may be partly involved in DDX3X nuclear export and in NXF1 localization to stress granules. Interacts with PABPC1/PABP1. Expressed ubiquitously.

The protein resides in the nucleus. It localises to the nucleoplasm. Its subcellular location is the nucleus speckle. The protein localises to the cytoplasm. It is found in the nuclear pore complex. The protein resides in the nucleus envelope. It localises to the stress granule. In terms of biological role, involved in the nuclear export of mRNA species bearing retroviral constitutive transport elements (CTE) and in the export of mRNA from the nucleus to the cytoplasm (TAP/NFX1 pathway). The NXF1-NXT1 heterodimer is involved in the export of HSP70 mRNA in conjunction with ALYREF/THOC4 and THOC5 components of the TREX complex. ALYREF/THOC4-bound mRNA is thought to be transferred to the NXF1-NXT1 heterodimer for export. Also involved in nuclear export of m6A-containing mRNAs: interaction between SRSF3 and YTHDC1 facilitates m6A-containing mRNA-binding to both SRSF3 and NXF1, promoting mRNA nuclear export. In Mus musculus (Mouse), this protein is Nuclear RNA export factor 1 (Nxf1).